A 418-amino-acid chain; its full sequence is E3 ubiquitin-protein ligase pellino homolog 1 (418 aa).

Residues 13-200 (APVKYGELIV…MHPRNGFTED (188 aa)) enclose the FHA; atypical domain. Position 121 is a phosphoserine; by ATM (serine 121). Threonine 127 carries the post-translational modification Phosphothreonine; by ATM. A ring-like domain; necessary for ubiqitination of RIPK3 region spans residues 311-399 (CGHVHGYHNW…TFHAACPFCA (89 aa)).

Belongs to the pellino family. As to quaternary structure, interacts with MAP3K7. Upon IL1B treatment, forms a complex with TRAF6, IRAK1, IRAK4 and MYD88; this complex recruits MAP3K7/TAK1, TAB1 and TAB2 to mediate NF-kappa-B activation. Direct binding of SMAD6 to PELI1 prevents the complex formation and hence negatively regulates IL1R-TLR signaling and eventually NF-kappa-B-mediated gene expression. Interacts (via atypical FHA domain) with RIPK3; preferentially binds to the 'Thr-182' phosphorylated form of RIPK3. Interacts with RIPK1 and IRAK1. Phosphorylation by IRAK1 and IRAK4 enhances its E3 ligase activity. Phosphorylated by ATM in response to DNA damage, promoting localization to DNA double-strand breaks (DSBs) and ability to mediate 'Lys-63'-linked ubiquitination of NBN. Post-translationally, sumoylated. In terms of tissue distribution, expressed at high levels in normal skin but decreased in keratinocytes from toxic epidermal necrolysis (TEN) patients (at protein level).

It localises to the chromosome. The enzyme catalyses S-ubiquitinyl-[E2 ubiquitin-conjugating enzyme]-L-cysteine + [acceptor protein]-L-lysine = [E2 ubiquitin-conjugating enzyme]-L-cysteine + N(6)-ubiquitinyl-[acceptor protein]-L-lysine.. It functions in the pathway protein modification; protein ubiquitination. In terms of biological role, E3 ubiquitin ligase catalyzing the covalent attachment of ubiquitin moieties onto substrate proteins. Involved in the TLR and IL-1 signaling pathways via interaction with the complex containing IRAK kinases and TRAF6. Acts as a positive regulator of inflammatory response in microglia through activation of NF-kappa-B and MAP kinase. Mediates 'Lys-63'-linked polyubiquitination of IRAK1 allowing subsequent NF-kappa-B activation. Conjugates 'Lys-63'-linked ubiquitin chains to the adapter protein ASC/PYCARD, which in turn is crucial for NLRP3 inflammasome activation. Mediates 'Lys-48'-linked polyubiquitination of RIPK3 leading to its subsequent proteasome-dependent degradation; preferentially recognizes and mediates the degradation of the 'Thr-182' phosphorylated form of RIPK3. Negatively regulates necroptosis by reducing RIPK3 expression. Mediates 'Lys-63'-linked ubiquitination of RIPK1. Following phosphorylation by ATM, catalyzes 'Lys-63'-linked ubiquitination of NBN, promoting DNA repair via homologous recombination. Negatively regulates activation of the metabolic mTORC1 signaling pathway by mediating 'Lys-63'-linked ubiquitination of mTORC1-inhibitory protein TSC1 and thereby promoting TSC1/TSC2 complex stability. The chain is E3 ubiquitin-protein ligase pellino homolog 1 from Homo sapiens (Human).